The following is a 152-amino-acid chain: 3-dehydroquinate dehydratase (152 aa).

Residue Tyr-23 is the Proton acceptor of the active site. Residues Asn-75, His-81, and Asp-88 each coordinate substrate. His-101 serves as the catalytic Proton donor. Substrate is bound by residues 102–103 (IS) and Arg-112.

The protein belongs to the type-II 3-dehydroquinase family. In terms of assembly, homododecamer.

The catalysed reaction is 3-dehydroquinate = 3-dehydroshikimate + H2O. The protein operates within metabolic intermediate biosynthesis; chorismate biosynthesis; chorismate from D-erythrose 4-phosphate and phosphoenolpyruvate: step 3/7. Functionally, catalyzes a trans-dehydration via an enolate intermediate. This is 3-dehydroquinate dehydratase from Alkalilimnicola ehrlichii (strain ATCC BAA-1101 / DSM 17681 / MLHE-1).